The primary structure comprises 184 residues: Adenine phosphoribosyltransferase 2 (184 aa).

Belongs to the purine/pyrimidine phosphoribosyltransferase family. Homodimer.

It localises to the cytoplasm. It carries out the reaction AMP + diphosphate = 5-phospho-alpha-D-ribose 1-diphosphate + adenine. Its pathway is purine metabolism; AMP biosynthesis via salvage pathway; AMP from adenine: step 1/1. In terms of biological role, catalyzes a salvage reaction resulting in the formation of AMP, that is energically less costly than de novo synthesis. This Rhizobium etli (strain ATCC 51251 / DSM 11541 / JCM 21823 / NBRC 15573 / CFN 42) protein is Adenine phosphoribosyltransferase 2.